Consider the following 617-residue polypeptide: Chaperone protein HscA homolog (617 aa).

The protein belongs to the heat shock protein 70 family.

Its function is as follows. Chaperone involved in the maturation of iron-sulfur cluster-containing proteins. Has a low intrinsic ATPase activity which is markedly stimulated by HscB. The protein is Chaperone protein HscA homolog of Aliivibrio salmonicida (strain LFI1238) (Vibrio salmonicida (strain LFI1238)).